A 522-amino-acid chain; its full sequence is Ribonuclease Y (522 aa).

Residues 7-23 (SGSSAAVISGLVGFYIS) traverse the membrane as a helical segment. The 67-residue stretch at 212-278 (LTNLVHLNDD…TKTLELLIQD (67 aa)) folds into the KH domain. Residues 338 to 431 (ALSHTLEVAH…VCAADALSAA (94 aa)) form the HD domain.

It belongs to the RNase Y family.

Its subcellular location is the cell membrane. Its function is as follows. Endoribonuclease that initiates mRNA decay. The polypeptide is Ribonuclease Y (Sulfurimonas denitrificans (strain ATCC 33889 / DSM 1251) (Thiomicrospira denitrificans (strain ATCC 33889 / DSM 1251))).